We begin with the raw amino-acid sequence, 137 residues long: Large ribosomal subunit protein uL16 (137 aa).

It belongs to the universal ribosomal protein uL16 family. As to quaternary structure, part of the 50S ribosomal subunit.

In terms of biological role, binds 23S rRNA and is also seen to make contacts with the A and possibly P site tRNAs. This chain is Large ribosomal subunit protein uL16, found in Pseudomonas fluorescens (strain Pf0-1).